The chain runs to 549 residues: Cilia- and flagella-associated protein 45 (549 aa).

The segment at 1–27 is disordered; the sequence is MPLSTAGVLSSASTASNRSRNRPRYRT. Coiled-coil stretches lie at residues 119–232 and 259–393; these read KEEL…MMEV and IVEQ…KRNQ. Residues 391–416 are disordered; that stretch reads RNQEVADREWRRKEKENAQKKMETEA.

This sequence belongs to the CFAP45 family. Microtubule inner protein component of sperm flagellar doublet microtubules. Interacts with AK8; dimerization with AK8 may create a cavity at the interface of the dimer that can accommodate AMP. Interacts with CFAP52. Interacts with ENKUR. Directly interacts with DNALI1. Interacts with DNAH11. Interacts with DNAI1. As to expression, expressed in trachea multiciliated cells.

Its subcellular location is the cytoplasm. It localises to the cytoskeleton. The protein resides in the cilium axoneme. It is found in the flagellum axoneme. The protein localises to the cell projection. Its subcellular location is the cilium. It localises to the flagellum. In terms of biological role, microtubule inner protein (MIP) part of the dynein-decorated doublet microtubules (DMTs) in cilia axoneme, which is required for motile cilia beating. It is an AMP-binding protein that may facilitate dynein ATPase-dependent ciliary and flagellar beating via adenine nucleotide homeostasis. May function as a donor of AMP to AK8 and hence promote ADP production. In Bos taurus (Bovine), this protein is Cilia- and flagella-associated protein 45.